A 404-amino-acid chain; its full sequence is CCA-adding enzyme (404 aa).

Positions 27 and 30 each coordinate ATP. CTP is bound by residues Gly-27 and Arg-30. Mg(2+)-binding residues include Asp-40 and Asp-42. The ATP site is built by Arg-111, Asp-154, Arg-157, Arg-160, and Arg-163. Positions 111, 154, 157, 160, and 163 each coordinate CTP.

This sequence belongs to the tRNA nucleotidyltransferase/poly(A) polymerase family. Bacterial CCA-adding enzyme type 3 subfamily. As to quaternary structure, homodimer. The cofactor is Mg(2+).

The enzyme catalyses a tRNA precursor + 2 CTP + ATP = a tRNA with a 3' CCA end + 3 diphosphate. The catalysed reaction is a tRNA with a 3' CCA end + 2 CTP + ATP = a tRNA with a 3' CCACCA end + 3 diphosphate. Its function is as follows. Catalyzes the addition and repair of the essential 3'-terminal CCA sequence in tRNAs without using a nucleic acid template. Adds these three nucleotides in the order of C, C, and A to the tRNA nucleotide-73, using CTP and ATP as substrates and producing inorganic pyrophosphate. tRNA 3'-terminal CCA addition is required both for tRNA processing and repair. Also involved in tRNA surveillance by mediating tandem CCA addition to generate a CCACCA at the 3' terminus of unstable tRNAs. While stable tRNAs receive only 3'-terminal CCA, unstable tRNAs are marked with CCACCA and rapidly degraded. The polypeptide is CCA-adding enzyme (Geobacillus thermodenitrificans (strain NG80-2)).